We begin with the raw amino-acid sequence, 932 residues long: DNA mismatch repair protein MutS (932 aa).

615–622 (GPNMAGKS) is an ATP binding site.

This sequence belongs to the DNA mismatch repair MutS family.

Its function is as follows. This protein is involved in the repair of mismatches in DNA. It is possible that it carries out the mismatch recognition step. This protein has a weak ATPase activity. This Clostridium botulinum (strain Loch Maree / Type A3) protein is DNA mismatch repair protein MutS.